We begin with the raw amino-acid sequence, 340 residues long: Branched-chain-amino-acid aminotransferase (340 aa).

N6-(pyridoxal phosphate)lysine is present on lysine 187.

It belongs to the class-IV pyridoxal-phosphate-dependent aminotransferase family. Requires pyridoxal 5'-phosphate as cofactor.

The enzyme catalyses L-leucine + 2-oxoglutarate = 4-methyl-2-oxopentanoate + L-glutamate. It catalyses the reaction L-isoleucine + 2-oxoglutarate = (S)-3-methyl-2-oxopentanoate + L-glutamate. It carries out the reaction L-valine + 2-oxoglutarate = 3-methyl-2-oxobutanoate + L-glutamate. Its pathway is amino-acid biosynthesis; L-isoleucine biosynthesis; L-isoleucine from 2-oxobutanoate: step 4/4. It functions in the pathway amino-acid biosynthesis; L-leucine biosynthesis; L-leucine from 3-methyl-2-oxobutanoate: step 4/4. The protein operates within amino-acid biosynthesis; L-valine biosynthesis; L-valine from pyruvate: step 4/4. Its function is as follows. Acts on leucine, isoleucine and valine. This chain is Branched-chain-amino-acid aminotransferase (ilvE), found in Helicobacter pylori (strain J99 / ATCC 700824) (Campylobacter pylori J99).